A 243-amino-acid chain; its full sequence is MIIIPARLKSSRFENKVLECIFGLPMVVRCAKNASLVDECVVACDDESIMEVCQKFHIKAVMTSKHHNSGTERCLEAAQLLGLKNDERVLNLQGDEPFLEKEVIAMLLEATKNAPFMATCAKVIDKEKAKNPNLVKVVLDHQNNALYFSRSLIPFLRDFDLKRPTPLLGHIGIYGFHNREILEELCSLKPCVLEEIEKLEQLRALYYQKNILVKIVQSESVGIDTKEDLQNALKIFNSLPTTP.

It belongs to the KdsB family.

The protein resides in the cytoplasm. It carries out the reaction 3-deoxy-alpha-D-manno-oct-2-ulosonate + CTP = CMP-3-deoxy-beta-D-manno-octulosonate + diphosphate. It participates in nucleotide-sugar biosynthesis; CMP-3-deoxy-D-manno-octulosonate biosynthesis; CMP-3-deoxy-D-manno-octulosonate from 3-deoxy-D-manno-octulosonate and CTP: step 1/1. It functions in the pathway bacterial outer membrane biogenesis; lipopolysaccharide biosynthesis. In terms of biological role, activates KDO (a required 8-carbon sugar) for incorporation into bacterial lipopolysaccharide in Gram-negative bacteria. The chain is 3-deoxy-manno-octulosonate cytidylyltransferase from Helicobacter acinonychis (strain Sheeba).